Consider the following 322-residue polypeptide: Beta-ketoacyl-[acyl-carrier-protein] synthase III (322 aa).

Residues Cys113 and His249 contribute to the active site. Residues 250–254 form an ACP-binding region; that stretch reads QANLR. Asn279 is a catalytic residue.

It belongs to the thiolase-like superfamily. FabH family. Homodimer.

It is found in the cytoplasm. The enzyme catalyses malonyl-[ACP] + acetyl-CoA + H(+) = 3-oxobutanoyl-[ACP] + CO2 + CoA. It functions in the pathway lipid metabolism; fatty acid biosynthesis. Catalyzes the condensation reaction of fatty acid synthesis by the addition to an acyl acceptor of two carbons from malonyl-ACP. Catalyzes the first condensation reaction which initiates fatty acid synthesis and may therefore play a role in governing the total rate of fatty acid production. Possesses both acetoacetyl-ACP synthase and acetyl transacylase activities. Its substrate specificity determines the biosynthesis of branched-chain and/or straight-chain of fatty acids. This Marinobacter nauticus (strain ATCC 700491 / DSM 11845 / VT8) (Marinobacter aquaeolei) protein is Beta-ketoacyl-[acyl-carrier-protein] synthase III.